A 303-amino-acid polypeptide reads, in one-letter code: N-acetyl-D-glucosamine kinase (303 aa).

ATP is bound by residues 4–11 (GFDIGGTK) and 133–140 (GVGGGLIF). Zn(2+) contacts are provided by His157, Cys177, Cys179, and Cys184.

It belongs to the ROK (NagC/XylR) family. NagK subfamily.

The enzyme catalyses N-acetyl-D-glucosamine + ATP = N-acetyl-D-glucosamine 6-phosphate + ADP + H(+). It functions in the pathway cell wall biogenesis; peptidoglycan recycling. Catalyzes the phosphorylation of N-acetyl-D-glucosamine (GlcNAc) derived from cell-wall degradation, yielding GlcNAc-6-P. This is N-acetyl-D-glucosamine kinase from Escherichia coli O157:H7.